We begin with the raw amino-acid sequence, 329 residues long: Flotillin-like protein FloA (329 aa).

2 helical membrane passes run 6 to 26 (FIVI…FVPI) and 27 to 47 (GLWI…LVGM).

This sequence belongs to the flotillin-like FloA family. As to quaternary structure, homooligomerizes.

The protein resides in the cell membrane. It is found in the membrane raft. Found in functional membrane microdomains (FMM) that may be equivalent to eukaryotic membrane rafts. FMMs are highly dynamic and increase in number as cells age. Flotillins are thought to be important factors in membrane fluidity. The polypeptide is Flotillin-like protein FloA (Staphylococcus aureus (strain USA300)).